Here is a 255-residue protein sequence, read N- to C-terminus: 14-3-3-like protein B (255 aa).

The protein belongs to the 14-3-3 family.

The chain is 14-3-3-like protein B from Nicotiana tabacum (Common tobacco).